The following is a 157-amino-acid chain: Ribosome maturation factor RimP (157 aa).

Belongs to the RimP family.

The protein localises to the cytoplasm. Required for maturation of 30S ribosomal subunits. The chain is Ribosome maturation factor RimP from Lactococcus lactis subsp. cremoris (strain MG1363).